We begin with the raw amino-acid sequence, 392 residues long: Formate-dependent phosphoribosylglycinamide formyltransferase (392 aa).

N(1)-(5-phospho-beta-D-ribosyl)glycinamide-binding positions include 22–23 and Glu-82; that span reads EL. Residues Arg-114, Lys-155, 160–165, 195–198, and Glu-203 each bind ATP; these read SSGKGQ and EGLV. An ATP-grasp domain is found at 119-308; that stretch reads RLAAETLGVP…EFALHVRAFL (190 aa). Residues Glu-267 and Glu-279 each contribute to the Mg(2+) site. N(1)-(5-phospho-beta-D-ribosyl)glycinamide-binding positions include Asp-286, Lys-355, and 362–363; that span reads RR.

Belongs to the PurK/PurT family. Homodimer.

The enzyme catalyses N(1)-(5-phospho-beta-D-ribosyl)glycinamide + formate + ATP = N(2)-formyl-N(1)-(5-phospho-beta-D-ribosyl)glycinamide + ADP + phosphate + H(+). Its pathway is purine metabolism; IMP biosynthesis via de novo pathway; N(2)-formyl-N(1)-(5-phospho-D-ribosyl)glycinamide from N(1)-(5-phospho-D-ribosyl)glycinamide (formate route): step 1/1. Functionally, involved in the de novo purine biosynthesis. Catalyzes the transfer of formate to 5-phospho-ribosyl-glycinamide (GAR), producing 5-phospho-ribosyl-N-formylglycinamide (FGAR). Formate is provided by PurU via hydrolysis of 10-formyl-tetrahydrofolate. This chain is Formate-dependent phosphoribosylglycinamide formyltransferase, found in Pectobacterium carotovorum subsp. carotovorum (strain PC1).